The sequence spans 52 residues: Sperm protamine P1 (52 aa).

This sequence belongs to the protamine P1 family. As to quaternary structure, cross-linked by interchain disulfide bonds around the DNA-helix. In terms of tissue distribution, testis.

It is found in the nucleus. The protein resides in the chromosome. Its function is as follows. Protamines substitute for histones in the chromatin of sperm during the haploid phase of spermatogenesis. They compact sperm DNA into a highly condensed, stable and inactive complex. The protein is Sperm protamine P1 (PRM1) of Alouatta seniculus (Red howler monkey).